A 561-amino-acid polypeptide reads, in one-letter code: Malto-oligosyltrehalose trehalohydrolase (561 aa).

Position 253-258 (253-258 (RLDAVH)) interacts with substrate. The active-site Nucleophile is the Asp-255. Glu-286 acts as the Proton donor in catalysis. Substrate is bound by residues 311 to 315 (DDFHH) and 379 to 384 (HDQVGN).

Belongs to the glycosyl hydrolase 13 family. In terms of assembly, homodimer.

The protein resides in the cytoplasm. The enzyme catalyses hydrolysis of (1-&gt;4)-alpha-D-glucosidic linkage in 4-alpha-D-[(1-&gt;4)-alpha-D-glucanosyl]n trehalose to yield trehalose and (1-&gt;4)-alpha-D-glucan.. It participates in glycan biosynthesis; trehalose biosynthesis. This chain is Malto-oligosyltrehalose trehalohydrolase (treZ), found in Saccharolobus solfataricus (strain ATCC 35092 / DSM 1617 / JCM 11322 / P2) (Sulfolobus solfataricus).